A 938-amino-acid chain; its full sequence is MEVDPSSSLPGAGEGGGGGIGGGGGDLWPFDSLTTSLLFSSVSASPQPLPASSSSWLTPPSPLWLFDERQLLPLDMGAPAAPATAPPAEAAAVVEEVHRTRSGNSDTTSKRVDQINSKWQFHLSIDDNTDSSCLFKERLTQALRYFKESTDQHLLVQVWAPVKSGDRYVLTTSGQPFVLDQQSIGLLQYRAVSMMYMFSVDGENAGELGLPGRVYKQKVPEWTPNVQYYSSTEYPRLNHAISYNVHGTVALPVFDPSVQNCIAVVELIMTSKKINYAGEVDKVCKALEAVNLKSTEILDHPNVQICNEGRQSALVEILEILTVVCEEHKLPLAQTWVPCKYRSVLAHGGGVKKSCLSFDGSCMGEVCMSTSDVAFHVIDAHMWGFRDACVEHHLQKGQGVSGKAFIYRRPCFSKDISQFCKLEYPLVHYARMFGLAGCFAICLQSMYTGDDDYILEFFLPPNCRNEDDQNALLESILARMKKCLRTLKVVGNGDTNEVCLQISNVLIIETEDLKTNVHFENSEGCFRESPESNGSQRVHEVDNDGNKVSIMSERHLLADDNSQNNGASVGRPNGSGASDSLHKSNKPPERRRGKAEKTISLDVLQQYFSGSLKNAAKSLGVCPTTMKRICRQHGISRWPSRKINKVNRSLSKLKQVIESVQGSDAAFNLTSITGPLPIPVGPSSDSQNLEKASPNKVAELSNLAVEGDRDSSLQKPIENDNLAILMSQQGFIDANNNLQLEADKASHSRSSSGEGSINSRTSEASCHGSPANQTFVCKPIASTFAEPQLIPEAFTKEPFQEPALPLSRMLIEDSGSSKDLKNLFTSAVDQPFLARSSNLALMQNSGTVTIKASFKEDIVRFRFPCSGSVTALKDEVAKRLRMDVGMFDIKYLDDDHEWVKLACNADLEECMEISGSHVIRLLVSDVAAHLGSSCGSSG.

Disordered regions lie at residues 1–26 (MEVD…GGGD) and 557–597 (LADD…KAEK). A compositionally biased stretch (gly residues) spans 12-26 (AGEGGGGGIGGGGGD). Residues 580 to 597 (SLHKSNKPPERRRGKAEK) are compositionally biased toward basic and acidic residues. The region spanning 585 to 666 (NKPPERRRGK…IESVQGSDAA (82 aa)) is the RWP-RK domain. Residues 640-662 (SRKINKVNRSLSKLKQVIESVQG) are a coiled coil. Residues 743–769 (DKASHSRSSSGEGSINSRTSEASCHGS) form a disordered region. Positions 748-762 (SRSSSGEGSINSRTS) are enriched in low complexity. Residues 847–926 (TVTIKASFKE…HVIRLLVSDV (80 aa)) enclose the PB1 domain.

The protein localises to the nucleus. Its function is as follows. Probable transcription factor. The polypeptide is Protein NLP3 (NLP3) (Oryza sativa subsp. japonica (Rice)).